We begin with the raw amino-acid sequence, 169 residues long: CRISPR system Cmr subunit Cmr5 (169 aa).

This sequence belongs to the CRISPR system Cmr5 family. In terms of assembly, monomer in isolation. Part of the type III-B Cmr ribonucleoprotein (RNP) complex, an elongated RNP with Cmr2 and Cmr3 as the base, with Cmr4 and Cmr5 forming a helical core along the mature crRNA (39 or 45 nt in length), while the complex is capped by Cmr6 and Cmr1. The 5' end of the crRNA is bound to Cmr2 and Cmr3, while Cmr6 and a Cmr1 subunit (Cmr1-1 or Cmr1-2) cap the 3' end of the crRNA. The target RNA lies antiparallel to the crRNA, with its 5' end near Cmr1 and Cmr6 and its 3' end near Cmr2 and Cmr3; major target cleavage occurs nears the junction of Cmr1/Cmr6 and Cmr4/Cmr, with minor cleavage occurring at 6 nt intervals which coincide with the proposed spacing of Cmr4 subunits. Interacts with Cmr4. Interacts with Cmr2, Cmr4 and Cmr6.

Its subcellular location is the cytoplasm. Its function is as follows. CRISPR (clustered regularly interspaced short palindromic repeat), is an adaptive immune system that provides protection against mobile genetic elements (viruses, transposable elements and conjugative plasmids). CRISPR clusters contain sequences complementary to antecedent mobile elements and target invading nucleic acids. CRISPR clusters are transcribed and processed into CRISPR RNA (crRNA), formerly called psiRNA (prokaryotic silencing) in this organism. Part of the Cmr ribonucleoprotein complex which has divalent cation-dependent endoribonuclease activity specific for ssRNA complementary to the crRNA (target NRA), generating 5' hydroxy- and 3' phosphate or 2'-3' cyclic phosphate termini. Cmr4 is probably the subunit that cleaves target RNA. Cmr complex does not cleave ssDNA complementary to the crRNA. Cleavage of invading RNA is guided by the crRNA; substrate cleavage occurs a fixed distance (14 nt) from the 3' end of the crRNA. In vitro reconstitution shows Cmr1-2 and Cmr5 are not absolutely necessary for target cleavage. The protein is CRISPR system Cmr subunit Cmr5 of Pyrococcus furiosus (strain ATCC 43587 / DSM 3638 / JCM 8422 / Vc1).